Here is a 144-residue protein sequence, read N- to C-terminus: Eukaryotic translation initiation factor 1A, Y-chromosomal (144 aa).

Over residues 1 to 15 (MPKNKGKGGKNRRRG) the composition is skewed to basic residues. The interval 1-26 (MPKNKGKGGKNRRRGKNENESEKREL) is disordered. The span at 16–26 (KNENESEKREL) shows a compositional bias: basic and acidic residues. One can recognise an S1-like domain in the interval 22–96 (EKRELVFKED…NKADVILKYN (75 aa)). Lysine 88 is covalently cross-linked (Glycyl lysine isopeptide (Lys-Gly) (interchain with G-Cter in ubiquitin)). Residues 114–144 (KINETDTFGPGDDDEIQFDDIGDDDEDIDDI) form a disordered region. Positions 124–144 (GDDDEIQFDDIGDDDEDIDDI) are enriched in acidic residues.

This sequence belongs to the eIF-1A family. Component of the 43S pre-initiation complex (43S PIC), which is composed of the 40S ribosomal subunit, EIF1, eIF1A (EIF1AX), eIF3 complex, EIF5 and eIF2-GTP-initiator tRNA complex (eIF2 ternary complex). Interacts with EIF5; this interaction contributes to the maintenance of EIF1 within the open 43S PIC. Interacts through its C-terminal domain (CTD) with the CTD of EIF5B; from the location of the start codon by the 43S complex until the formation of the 80S complex. As to expression, ubiquitous.

The protein resides in the cytoplasm. In terms of biological role, component of the 43S pre-initiation complex (43S PIC), which binds to the mRNA cap-proximal region, scans mRNA 5'-untranslated region, and locates the initiation codon. This protein enhances formation of the cap-proximal complex. Together with EIF1, facilitates scanning, start codon recognition, promotion of the assembly of 48S complex at the initiation codon (43S PIC becomes 48S PIC after the start codon is reached), and dissociation of aberrant complexes. After start codon location, together with EIF5B orients the initiator methionine-tRNA in a conformation that allows 60S ribosomal subunit joining to form the 80S initiation complex. Is released after 80S initiation complex formation, just after GTP hydrolysis by EIF5B, and before release of EIF5B. Its globular part is located in the A site of the 40S ribosomal subunit. Its interaction with EIF5 during scanning contribute to the maintenance of EIF1 within the open 43S PIC. In contrast to yeast orthologs, does not bind EIF1. In Homo sapiens (Human), this protein is Eukaryotic translation initiation factor 1A, Y-chromosomal (EIF1AY).